The primary structure comprises 349 residues: 4-hydroxy-3-methylbut-2-enyl diphosphate reductase (349 aa).

C18 is a binding site for [4Fe-4S] cluster. Residues H47 and H83 each coordinate (2E)-4-hydroxy-3-methylbut-2-enyl diphosphate. Residues H47 and H83 each coordinate dimethylallyl diphosphate. 2 residues coordinate isopentenyl diphosphate: H47 and H83. C105 provides a ligand contact to [4Fe-4S] cluster. Residue H133 participates in (2E)-4-hydroxy-3-methylbut-2-enyl diphosphate binding. H133 is a binding site for dimethylallyl diphosphate. Isopentenyl diphosphate is bound at residue H133. E135 functions as the Proton donor in the catalytic mechanism. T174 lines the (2E)-4-hydroxy-3-methylbut-2-enyl diphosphate pocket. C204 is a [4Fe-4S] cluster binding site. 4 residues coordinate (2E)-4-hydroxy-3-methylbut-2-enyl diphosphate: S232, S233, N234, and S277. Positions 232, 233, 234, and 277 each coordinate dimethylallyl diphosphate. Residues S232, S233, N234, and S277 each coordinate isopentenyl diphosphate.

The protein belongs to the IspH family. Requires [4Fe-4S] cluster as cofactor.

The catalysed reaction is isopentenyl diphosphate + 2 oxidized [2Fe-2S]-[ferredoxin] + H2O = (2E)-4-hydroxy-3-methylbut-2-enyl diphosphate + 2 reduced [2Fe-2S]-[ferredoxin] + 2 H(+). The enzyme catalyses dimethylallyl diphosphate + 2 oxidized [2Fe-2S]-[ferredoxin] + H2O = (2E)-4-hydroxy-3-methylbut-2-enyl diphosphate + 2 reduced [2Fe-2S]-[ferredoxin] + 2 H(+). It participates in isoprenoid biosynthesis; dimethylallyl diphosphate biosynthesis; dimethylallyl diphosphate from (2E)-4-hydroxy-3-methylbutenyl diphosphate: step 1/1. The protein operates within isoprenoid biosynthesis; isopentenyl diphosphate biosynthesis via DXP pathway; isopentenyl diphosphate from 1-deoxy-D-xylulose 5-phosphate: step 6/6. Catalyzes the conversion of 1-hydroxy-2-methyl-2-(E)-butenyl 4-diphosphate (HMBPP) into a mixture of isopentenyl diphosphate (IPP) and dimethylallyl diphosphate (DMAPP). Acts in the terminal step of the DOXP/MEP pathway for isoprenoid precursor biosynthesis. This Bartonella bacilliformis (strain ATCC 35685 / KC583 / Herrer 020/F12,63) protein is 4-hydroxy-3-methylbut-2-enyl diphosphate reductase.